Here is a 131-residue protein sequence, read N- to C-terminus: Plastocyanin (131 aa).

An N-terminal signal peptide occupies residues 1 to 34 (MKFFASLSKRFAPVLSLVVLVAGTLLLSAAPASA). A Plastocyanin-like domain is found at 35 to 131 (ATVQIKMGTD…AGMVGTITVE (97 aa)). 4 residues coordinate Cu cation: histidine 73, cysteine 116, histidine 119, and methionine 124.

Belongs to the plastocyanin family. The cofactor is Cu(2+).

Its subcellular location is the cellular thylakoid membrane. In terms of biological role, participates in electron transfer between P700 and the cytochrome b6-f complex in photosystem I. This chain is Plastocyanin (petE), found in Prochlorothrix hollandica.